The chain runs to 270 residues: Glutamate racemase (270 aa).

Substrate-binding positions include 14-15 (DS) and 46-47 (YG). Cys-77 functions as the Proton donor/acceptor in the catalytic mechanism. 78–79 (NT) is a binding site for substrate. The active-site Proton donor/acceptor is Cys-186. A substrate-binding site is contributed by 187-188 (TH).

It belongs to the aspartate/glutamate racemases family.

It catalyses the reaction L-glutamate = D-glutamate. It participates in cell wall biogenesis; peptidoglycan biosynthesis. In terms of biological role, provides the (R)-glutamate required for cell wall biosynthesis. The sequence is that of Glutamate racemase from Trichodesmium erythraeum (strain IMS101).